The sequence spans 926 residues: Translation initiation factor IF-2 (926 aa).

Disordered regions lie at residues 1–185 and 200–299; these read MTDS…EEVE and EDKA…RRRG. Low complexity-rich tracts occupy residues 13–24 and 70–96; these read TGKKTLTLKPTG and APAT…AAPQ. The segment covering 110–133 has biased composition (polar residues); the sequence is TNQYSQQRHPGQQNRPQASSQPSR. A compositionally biased stretch (basic and acidic residues) spans 151–185; that stretch reads MDARRRALAEAQVREVEDAKRRAEEEVRRQAEEVE. Residues 211–251 show a composition bias toward low complexity; the sequence is APEPVAEPVAPVAETPRAADPAPRAPSPAGAKPAAGAPAPS. Residues 424–591 form the tr-type G domain; the sequence is SRPPVVTIMG…AVLLQAEILD (168 aa). Positions 433-440 are G1; that stretch reads GHVDHGKT. 433–440 contacts GTP; it reads GHVDHGKT. Positions 458 to 462 are G2; the sequence is GITQH. The segment at 479 to 482 is G3; that stretch reads DTPG. GTP contacts are provided by residues 479 to 483 and 533 to 536; these read DTPGH and NKID. The segment at 533 to 536 is G4; that stretch reads NKID. Residues 569–571 form a G5 region; sequence SAK.

Belongs to the TRAFAC class translation factor GTPase superfamily. Classic translation factor GTPase family. IF-2 subfamily.

It localises to the cytoplasm. One of the essential components for the initiation of protein synthesis. Protects formylmethionyl-tRNA from spontaneous hydrolysis and promotes its binding to the 30S ribosomal subunits. Also involved in the hydrolysis of GTP during the formation of the 70S ribosomal complex. This Allorhizobium ampelinum (strain ATCC BAA-846 / DSM 112012 / S4) (Agrobacterium vitis (strain S4)) protein is Translation initiation factor IF-2.